The primary structure comprises 79 residues: Beta-defensin 15 (79 aa).

An N-terminal signal peptide occupies residues 1-20 (MKTFLFLFAVLFFLDPAKNA). 3 disulfides stabilise this stretch: cysteine 26–cysteine 53, cysteine 33–cysteine 47, and cysteine 37–cysteine 54.

It belongs to the beta-defensin family. In terms of tissue distribution, expressed in testis and to a lesser extent in epididymis (caput, corpus and cauda). Also weakly expressed in kidneys and colon.

It is found in the secreted. In terms of biological role, has antibacterial activity. The sequence is that of Beta-defensin 15 (Defb15) from Mus musculus (Mouse).